We begin with the raw amino-acid sequence, 171 residues long: Small ribosomal subunit protein uS13 (171 aa).

Disordered stretches follow at residues M1 to K22 and R142 to E171. Residues K10 to K22 are compositionally biased toward basic and acidic residues. The span at R142–G158 shows a compositional bias: basic residues.

This sequence belongs to the universal ribosomal protein uS13 family. Part of the 30S ribosomal subunit. Forms a loose heterodimer with protein S19. Forms two bridges to the 50S subunit in the 70S ribosome.

In terms of biological role, located at the top of the head of the 30S subunit, it contacts several helices of the 16S rRNA. In the 70S ribosome it contacts the 23S rRNA (bridge B1a) and protein L5 of the 50S subunit (bridge B1b), connecting the 2 subunits; these bridges are implicated in subunit movement. This is Small ribosomal subunit protein uS13 from Thermoplasma volcanium (strain ATCC 51530 / DSM 4299 / JCM 9571 / NBRC 15438 / GSS1).